The primary structure comprises 145 residues: Lipoprotein signal peptidase (145 aa).

3 helical membrane-spanning segments follow: residues 1-21, 57-77, and 79-99; these read MVYI…LLVM, YLFI…YYKT, and GSGM…GNLI. Active-site residues include Asp-109 and Asp-123. Residues 115–135 form a helical membrane-spanning segment; it reads IWPVFNLADSSVVIGAALLIL.

It belongs to the peptidase A8 family.

The protein localises to the cell inner membrane. It carries out the reaction Release of signal peptides from bacterial membrane prolipoproteins. Hydrolyzes -Xaa-Yaa-Zaa-|-(S,diacylglyceryl)Cys-, in which Xaa is hydrophobic (preferably Leu), and Yaa (Ala or Ser) and Zaa (Gly or Ala) have small, neutral side chains.. The protein operates within protein modification; lipoprotein biosynthesis (signal peptide cleavage). Functionally, this protein specifically catalyzes the removal of signal peptides from prolipoproteins. The chain is Lipoprotein signal peptidase from Halothermothrix orenii (strain H 168 / OCM 544 / DSM 9562).